We begin with the raw amino-acid sequence, 456 residues long: UDP-N-acetylglucosamine 1-carboxyvinyltransferase (456 aa).

34–35 is a binding site for phosphoenolpyruvate; the sequence is KN. Position 104 (arginine 104) interacts with UDP-N-acetyl-alpha-D-glucosamine. Catalysis depends on cysteine 128, which acts as the Proton donor. Cysteine 128 carries the 2-(S-cysteinyl)pyruvic acid O-phosphothioketal modification. UDP-N-acetyl-alpha-D-glucosamine contacts are provided by aspartate 319 and isoleucine 341.

The protein belongs to the EPSP synthase family. MurA subfamily.

It is found in the cytoplasm. The enzyme catalyses phosphoenolpyruvate + UDP-N-acetyl-alpha-D-glucosamine = UDP-N-acetyl-3-O-(1-carboxyvinyl)-alpha-D-glucosamine + phosphate. Its pathway is cell wall biogenesis; peptidoglycan biosynthesis. Cell wall formation. Adds enolpyruvyl to UDP-N-acetylglucosamine. The sequence is that of UDP-N-acetylglucosamine 1-carboxyvinyltransferase from Prochlorococcus marinus (strain MIT 9312).